Reading from the N-terminus, the 106-residue chain is DNA-directed RNA polymerase subunit Rpo6 (106 aa).

This sequence belongs to the archaeal Rpo6/eukaryotic RPB6 RNA polymerase subunit family. In terms of assembly, part of the RNA polymerase complex.

The protein resides in the cytoplasm. It catalyses the reaction RNA(n) + a ribonucleoside 5'-triphosphate = RNA(n+1) + diphosphate. DNA-dependent RNA polymerase (RNAP) catalyzes the transcription of DNA into RNA using the four ribonucleoside triphosphates as substrates. The protein is DNA-directed RNA polymerase subunit Rpo6 of Pyrobaculum aerophilum (strain ATCC 51768 / DSM 7523 / JCM 9630 / CIP 104966 / NBRC 100827 / IM2).